The following is a 361-amino-acid chain: 3-dehydroquinate synthase (361 aa).

NAD(+) is bound by residues 72–77 (SGEKEK), 130–131 (TT), lysine 142, and lysine 151. Zn(2+)-binding residues include glutamate 184, histidine 247, and histidine 264.

It belongs to the sugar phosphate cyclases superfamily. Dehydroquinate synthase family. It depends on Co(2+) as a cofactor. The cofactor is Zn(2+). Requires NAD(+) as cofactor.

It localises to the cytoplasm. It carries out the reaction 7-phospho-2-dehydro-3-deoxy-D-arabino-heptonate = 3-dehydroquinate + phosphate. It participates in metabolic intermediate biosynthesis; chorismate biosynthesis; chorismate from D-erythrose 4-phosphate and phosphoenolpyruvate: step 2/7. In terms of biological role, catalyzes the conversion of 3-deoxy-D-arabino-heptulosonate 7-phosphate (DAHP) to dehydroquinate (DHQ). This chain is 3-dehydroquinate synthase, found in Bacillus cereus (strain ATCC 10987 / NRS 248).